The chain runs to 204 residues: Peptide deformylase (204 aa).

Residues C131 and H174 each coordinate Fe cation. E175 is an active-site residue. H178 is a Fe cation binding site.

Belongs to the polypeptide deformylase family. Requires Fe(2+) as cofactor.

The enzyme catalyses N-terminal N-formyl-L-methionyl-[peptide] + H2O = N-terminal L-methionyl-[peptide] + formate. Its function is as follows. Removes the formyl group from the N-terminal Met of newly synthesized proteins. Requires at least a dipeptide for an efficient rate of reaction. N-terminal L-methionine is a prerequisite for activity but the enzyme has broad specificity at other positions. The chain is Peptide deformylase from Streptococcus pyogenes serotype M18 (strain MGAS8232).